We begin with the raw amino-acid sequence, 142 residues long: Large ribosomal subunit protein uL11 (142 aa).

The protein belongs to the universal ribosomal protein uL11 family. Part of the ribosomal stalk of the 50S ribosomal subunit. Interacts with L10 and the large rRNA to form the base of the stalk. L10 forms an elongated spine to which L12 dimers bind in a sequential fashion forming a multimeric L10(L12)X complex. One or more lysine residues are methylated.

Forms part of the ribosomal stalk which helps the ribosome interact with GTP-bound translation factors. This chain is Large ribosomal subunit protein uL11, found in Baumannia cicadellinicola subsp. Homalodisca coagulata.